Consider the following 144-residue polypeptide: Small ribosomal subunit protein uS12 (144 aa).

Residue Asp-103 is modified to 3-methylthioaspartic acid. Residues 125–144 are disordered; the sequence is QQGRSRYGAKKGKAAPAKKK. The segment covering 131–144 has biased composition (basic residues); sequence YGAKKGKAAPAKKK.

The protein belongs to the universal ribosomal protein uS12 family. As to quaternary structure, part of the 30S ribosomal subunit. Contacts proteins S8 and S17. May interact with IF1 in the 30S initiation complex.

Its function is as follows. With S4 and S5 plays an important role in translational accuracy. Interacts with and stabilizes bases of the 16S rRNA that are involved in tRNA selection in the A site and with the mRNA backbone. Located at the interface of the 30S and 50S subunits, it traverses the body of the 30S subunit contacting proteins on the other side and probably holding the rRNA structure together. The combined cluster of proteins S8, S12 and S17 appears to hold together the shoulder and platform of the 30S subunit. This Dehalococcoides mccartyi (strain ATCC BAA-2100 / JCM 16839 / KCTC 5957 / BAV1) protein is Small ribosomal subunit protein uS12.